A 519-amino-acid chain; its full sequence is Acetylcholine receptor subunit gamma (519 aa).

The first 22 residues, 1-22, serve as a signal peptide directing secretion; sequence MQGGQRPHLLLLLLAVCLGAQS. The Extracellular portion of the chain corresponds to 23–240; it reads RNQEERLLAD…VVFYLLIQRK (218 aa). Asparagine 52 and asparagine 163 each carry an N-linked (GlcNAc...) asparagine glycan. Cysteine 150 and cysteine 164 are disulfide-bonded. Helical transmembrane passes span 241–265, 274–292, and 308–329; these read PLFYVINIIAPCVLISSVAILIYFL, CTVATNVLLAQTVFLFLVA, and YLTFLMVVTILIVVNSVVVLNV. The Cytoplasmic portion of the chain corresponds to 330-476; it reads SLRSPHTHSM…WLLVGRVLDR (147 aa). A helical transmembrane segment spans residues 477 to 497; sequence VCFLAMLSLFICGTAGIFLMA.

The protein belongs to the ligand-gated ion channel (TC 1.A.9) family. Acetylcholine receptor (TC 1.A.9.1) subfamily. Gamma/CHRNG sub-subfamily. Pentamer of two alpha chains, and one each of the beta, delta, and gamma (in immature muscle) or epsilon (in mature muscle) chains. As to expression, at least in myotubes of skeletal muscle.

It is found in the postsynaptic cell membrane. Its subcellular location is the cell membrane. It carries out the reaction K(+)(in) = K(+)(out). It catalyses the reaction Na(+)(in) = Na(+)(out). Functionally, after binding acetylcholine, the AChR responds by an extensive change in conformation that affects all subunits and leads to opening of an ion-conducting channel across the plasma membrane. The protein is Acetylcholine receptor subunit gamma (Chrng) of Mus musculus (Mouse).